Reading from the N-terminus, the 266-residue chain is GTP cyclohydrolase III (266 aa).

It belongs to the archaeal-type GTP cyclohydrolase family.

The enzyme catalyses GTP + 3 H2O = 2-amino-5-formylamino-6-(5-phospho-D-ribosylamino)pyrimidin-4(3H)-one + 2 phosphate + 2 H(+). Functionally, catalyzes the formation of 2-amino-5-formylamino-6-ribofuranosylamino-4(3H)-pyrimidinone ribonucleotide monophosphate and inorganic phosphate from GTP. Also has an independent pyrophosphate phosphohydrolase activity. The protein is GTP cyclohydrolase III of Methanococcus maripaludis (strain DSM 14266 / JCM 13030 / NBRC 101832 / S2 / LL).